The sequence spans 156 residues: Small ribosomal subunit protein uS7 (156 aa).

It belongs to the universal ribosomal protein uS7 family. In terms of assembly, part of the 30S ribosomal subunit. Contacts proteins S9 and S11.

One of the primary rRNA binding proteins, it binds directly to 16S rRNA where it nucleates assembly of the head domain of the 30S subunit. Is located at the subunit interface close to the decoding center, probably blocks exit of the E-site tRNA. This Gloeothece citriformis (strain PCC 7424) (Cyanothece sp. (strain PCC 7424)) protein is Small ribosomal subunit protein uS7.